The sequence spans 125 residues: Histone H2A (125 aa).

The segment covering 1–18 (MSGRGKGGKAKGKSKSRS) has biased composition (basic residues). The interval 1 to 23 (MSGRGKGGKAKGKSKSRSSRAGL) is disordered. Position 2 is an N-acetylserine (S2). Position 2 is a phosphoserine (S2). The residue at position 104 (Q104) is an N5-methylglutamine.

The protein belongs to the histone H2A family. The nucleosome is a histone octamer containing two molecules each of H2A, H2B, H3 and H4 assembled in one H3-H4 heterotetramer and two H2A-H2B heterodimers. The octamer wraps approximately 147 bp of DNA.

The protein resides in the nucleus. The protein localises to the chromosome. Its function is as follows. Core component of nucleosome. Nucleosomes wrap and compact DNA into chromatin, limiting DNA accessibility to the cellular machineries which require DNA as a template. Histones thereby play a central role in transcription regulation, DNA repair, DNA replication and chromosomal stability. DNA accessibility is regulated via a complex set of post-translational modifications of histones, also called histone code, and nucleosome remodeling. This chain is Histone H2A, found in Urechis caupo (Innkeeper worm).